The following is a 723-amino-acid chain: Solute carrier organic anion transporter family member 4A1 (723 aa).

At 1 to 102 (MPQHAMGDTH…KCLQVFNTPK (102 aa)) the chain is on the cytoplasmic side. The interval 23 to 64 (SSATDSGCDTPPSSRASPASLRSAHGTLGSSSQPLFEPQAEK) is disordered. Residues 33 to 46 (PPSSRASPASLRSA) are compositionally biased toward low complexity. Phosphoserine occurs at positions 39, 42, and 45. A helical membrane pass occupies residues 103–123 (GFLFFLCAASFLQGMTVNGFI). Over 124-142 (NTVITSIERRFDLHSYQSG) the chain is Extracellular. The helical transmembrane segment at 143–163 (LIASSYDIAACLCLTFVSYFG) threads the bilayer. Residues 164–169 (GNGHKP) are Cytoplasmic-facing. The chain crosses the membrane as a helical span at residues 170-194 (RWLGWGVLVLGIGSLVFALPHFTAG). The Extracellular portion of the chain corresponds to 195 to 224 (RYEVEMDEGLGTGTCLTNQSHVECKDSASG). Asn212 carries N-linked (GlcNAc...) asparagine glycosylation. Residues 225 to 255 (LSNYRLIFMLGQLLHGVGATPLYTLGVTYLD) form a helical membrane-spanning segment. Topologically, residues 256–274 (ENVKSSYSPIYIAIFYTAA) are cytoplasmic. Residues 275 to 295 (ILGPAAGYLIGGAMLNVYTEV) traverse the membrane as a helical segment. The Extracellular portion of the chain corresponds to 296–309 (GQRTELTTDSPLWV). A helical membrane pass occupies residues 310-334 (GAWWIGFLGTGIAAFLIAIPILGYP). Residues 335–380 (RQLPGSQRYVVMRAAETQQLKDHSRGAVSNPAFGKTVRDLPLSIWL) are Cytoplasmic-facing. The chain crosses the membrane as a helical span at residues 381–402 (LLRNPTFILLCLAGATEATLIA). Topologically, residues 403–422 (GMSTFGPKFFEAQFSLSASE) are extracellular. A helical transmembrane segment spans residues 423 to 446 (AATLFGYLVVPAGGGGTLLGGFLV). Over 447–450 (NKFK) the chain is Cytoplasmic. Residues 451-473 (LRGSGIIRFCLFCTLTSLLAFFV) form a helical membrane-spanning segment. Residues 474-582 (FLMHCPNVHM…ASTCQSKPFL (109 aa)) lie on the Extracellular side of the membrane. In terms of domain architecture, Kazal-like spans 500–557 (LDLKAACNAIYCCQPKHYSPLCGSDGTMYYSPCYAGCPADAETDLGGQKVYRGCSCIL). 2 disulfides stabilise this stretch: Cys506-Cys536 and Cys521-Cys555. N-linked (GlcNAc...) asparagine glycosylation occurs at Asn566. A helical membrane pass occupies residues 583–605 (LVLVFVVIIFTFLSSIPALTATL). Over 606–614 (RCVSDRQRS) the chain is Cytoplasmic. A helical membrane pass occupies residues 615–640 (FALGIQWIVVRTLGSIPGPIAFGWVI). Residues 641–673 (DKACLLWQDQCGHQGSCFVYENEAMSRYMLIAG) lie on the Extracellular side of the membrane. A helical transmembrane segment spans residues 674 to 691 (LTFKVLGFLFFVAAYFLY). Residues 692–723 (KSPSVSSDGLEASLPSQSSASDSPTEQLQSNV) lie on the Cytoplasmic side of the membrane. Positions 700–723 (GLEASLPSQSSASDSPTEQLQSNV) are disordered. A compositionally biased stretch (low complexity) spans 701-723 (LEASLPSQSSASDSPTEQLQSNV).

This sequence belongs to the organo anion transporter (TC 2.A.60) family.

The protein resides in the cell membrane. The enzyme catalyses 3,3',5-triiodo-L-thyronine(out) + L-glutamate(in) = 3,3',5-triiodo-L-thyronine(in) + L-glutamate(out). It carries out the reaction L-thyroxine(out) + L-glutamate(in) = L-thyroxine(in) + L-glutamate(out). It catalyses the reaction estrone 3-sulfate(out) + L-glutamate(in) = estrone 3-sulfate(in) + L-glutamate(out). The catalysed reaction is taurocholate(out) + L-glutamate(in) = taurocholate(in) + L-glutamate(out). The enzyme catalyses 3,3',5-triiodo-L-thyronine(out) = 3,3',5-triiodo-L-thyronine(in). It carries out the reaction L-thyroxine(out) = L-thyroxine(in). It catalyses the reaction 3,3',5'-triiodo-L-thyronine(out) = 3,3',5'-triiodo-L-thyronine(in). The catalysed reaction is estrone 3-sulfate(out) = estrone 3-sulfate(in). The enzyme catalyses 17beta-estradiol 17-O-(beta-D-glucuronate)(out) = 17beta-estradiol 17-O-(beta-D-glucuronate)(in). It carries out the reaction taurocholate(out) = taurocholate(in). It catalyses the reaction prostaglandin E2(out) = prostaglandin E2(in). Organic anion antiporter with apparent broad substrate specificity. Recognizes various substrates including thyroid hormones 3,3',5-triiodo-L-thyronine (T3), L-thyroxine (T4) and 3,3',5'-triiodo-L-thyronine (rT3), conjugated steroids such as estrone 3-sulfate and estradiol 17-beta glucuronide, bile acids such as taurocholate and prostanoids such as prostaglandin E2, likely operating in a tissue-specific manner. May be involved in uptake of metabolites from the circulation into organs such as kidney, liver or placenta. Possibly drives the selective transport of thyroid hormones and estrogens coupled to an outward glutamate gradient across the microvillous membrane of the placenta. The transport mechanism, its electrogenicity and potential tissue-specific counterions remain to be elucidated. The chain is Solute carrier organic anion transporter family member 4A1 (Slco4a1) from Mus musculus (Mouse).